Reading from the N-terminus, the 315-residue chain is Manganese-dependent 2,3-dihydroxybiphenyl 1,2-dioxygenase (315 aa).

VOC domains are found at residues 7–121 (KFGH…IYYD) and 150–273 (RIDH…LFSG). Mn(2+)-binding residues include His-153, His-216, and Glu-269.

The protein belongs to the extradiol ring-cleavage dioxygenase family. In terms of assembly, homotetramer. The cofactor is Mn(2+).

It carries out the reaction biphenyl-2,3-diol + O2 = 2-hydroxy-6-oxo-6-phenylhexa-2,4-dienoate + H(+). Its pathway is xenobiotic degradation; biphenyl degradation; 2-hydroxy-2,4-pentadienoate and benzoate from biphenyl: step 3/4. Catalyzes the meta-cleavage of the hydroxylated biphenyl ring. The enzyme can oxidize a wide range of substrates, and the substrate preference order is 2,3-dihydroxybiphenyl &gt; 3-methylcatechol &gt; catechol &gt; 4-methylcatechol &gt; 4-chlorocatechol. This Geobacillus genomosp. 3 protein is Manganese-dependent 2,3-dihydroxybiphenyl 1,2-dioxygenase (bphC).